We begin with the raw amino-acid sequence, 203 residues long: Guanylate kinase (203 aa).

Residues 3–181 (GTLYIVAAPS…AVSEMCAIFT (179 aa)) enclose the Guanylate kinase-like domain. An ATP-binding site is contributed by 10-17 (APSGAGKS).

This sequence belongs to the guanylate kinase family.

It localises to the cytoplasm. The catalysed reaction is GMP + ATP = GDP + ADP. Functionally, essential for recycling GMP and indirectly, cGMP. The polypeptide is Guanylate kinase (Xanthomonas campestris pv. campestris (strain 8004)).